The sequence spans 438 residues: tRNA-2-methylthio-N(6)-dimethylallyladenosine synthase (438 aa).

In terms of domain architecture, MTTase N-terminal spans 4–120 (KKLYIDTVGC…VPEMVKDAEA (117 aa)). Residues C13, C49, C83, C158, C162, and C165 each coordinate [4Fe-4S] cluster. Positions 144 to 377 (GRKRVSAFVT…QAVHSRIHNE (234 aa)) constitute a Radical SAM core domain. A TRAM domain is found at 377 to 438 (ETYVGSTQQV…YANSLLGELL (62 aa)).

Belongs to the methylthiotransferase family. MiaB subfamily. As to quaternary structure, monomer. Requires [4Fe-4S] cluster as cofactor.

The protein resides in the cytoplasm. It catalyses the reaction N(6)-dimethylallyladenosine(37) in tRNA + (sulfur carrier)-SH + AH2 + 2 S-adenosyl-L-methionine = 2-methylsulfanyl-N(6)-dimethylallyladenosine(37) in tRNA + (sulfur carrier)-H + 5'-deoxyadenosine + L-methionine + A + S-adenosyl-L-homocysteine + 2 H(+). Functionally, catalyzes the methylthiolation of N6-(dimethylallyl)adenosine (i(6)A), leading to the formation of 2-methylthio-N6-(dimethylallyl)adenosine (ms(2)i(6)A) at position 37 in tRNAs that read codons beginning with uridine. The chain is tRNA-2-methylthio-N(6)-dimethylallyladenosine synthase from Trichlorobacter lovleyi (strain ATCC BAA-1151 / DSM 17278 / SZ) (Geobacter lovleyi).